Consider the following 667-residue polypeptide: Transketolase (667 aa).

His27 serves as a coordination point for substrate. Thiamine diphosphate-binding positions include His67 and 115-117 (GPL). Mg(2+) is bound at residue Asp156. Residues Gly157 and Asn186 each coordinate thiamine diphosphate. Asn186 and Ile188 together coordinate Mg(2+). His262, Arg357, and Ser384 together coordinate substrate. Position 262 (His262) interacts with thiamine diphosphate. Glu411 serves as the catalytic Proton donor. Thiamine diphosphate is bound at residue Phe437. Substrate-binding residues include His461, Asp469, and Arg520.

The protein belongs to the transketolase family. In terms of assembly, homodimer. Mg(2+) is required as a cofactor. It depends on Ca(2+) as a cofactor. Requires Mn(2+) as cofactor. The cofactor is Co(2+). Thiamine diphosphate serves as cofactor.

The catalysed reaction is D-sedoheptulose 7-phosphate + D-glyceraldehyde 3-phosphate = aldehydo-D-ribose 5-phosphate + D-xylulose 5-phosphate. Functionally, catalyzes the transfer of a two-carbon ketol group from a ketose donor to an aldose acceptor, via a covalent intermediate with the cofactor thiamine pyrophosphate. This is Transketolase (tkt) from Bacillus subtilis (strain 168).